We begin with the raw amino-acid sequence, 209 residues long: MSSGDEAVAAAAQRARVTAARNIPVFGDLPLPADTANLREGANLDDALLALLPLVGVWRGEGEGRAAHGDYRFGQQIVVSHDGGDYLNWEARSWHLDDDGEYARPGLRETGFWRFVSDPGDPEESQAIELLLAHSAGYIELFYGRPLNQSSWELVTDALARSKSGMLVGGAKRLYGIIEGGDLAYVEERVDADGGLVPHLSARLTRFVG.

Residues 56-62 carry the GXWXGXG motif; sequence GVWRGEG. Positions 172 and 199 each coordinate heme b.

It belongs to the nitrobindin family. As to quaternary structure, homodimer. Requires heme b as cofactor.

It catalyses the reaction peroxynitrite = nitrate. It functions in the pathway nitrogen metabolism. In terms of biological role, heme-binding protein able to scavenge peroxynitrite and to protect free L-tyrosine against peroxynitrite-mediated nitration, by acting as a peroxynitrite isomerase that converts peroxynitrite to nitrate. Therefore, this protein likely plays a role in peroxynitrite sensing and in the detoxification of reactive nitrogen and oxygen species (RNS and ROS, respectively). Is able to bind nitric oxide (NO) in vitro, but may act as a sensor of peroxynitrite levels in vivo. The chain is Peroxynitrite isomerase 2 from Mycolicibacterium vanbaalenii (strain DSM 7251 / JCM 13017 / BCRC 16820 / KCTC 9966 / NRRL B-24157 / PYR-1) (Mycobacterium vanbaalenii).